A 279-amino-acid chain; its full sequence is Methyltransferase ausD (279 aa).

S-adenosyl-L-methionine-binding positions include 124–125 (DI) and 152–153 (DV).

The protein belongs to the class I-like SAM-binding methyltransferase superfamily. In terms of assembly, homodimer.

It participates in secondary metabolite biosynthesis; terpenoid biosynthesis. In terms of biological role, methyltransferase; part of the gene cluster A that mediates the biosynthesis of the fungal meroterpenoid acetoxydehydroaustin. The first step of the pathway is the synthesis of 3,5-dimethylorsellinic acid by the polyketide synthase ausA. 3,5-dimethylorsellinic acid is then prenylated by the polyprenyl transferase ausN. Further epoxidation by the FAD-dependent monooxygenase ausM and cyclization by the probable terpene cyclase ausL lead to the formation of protoaustinoid A. Protoaustinoid A is then oxidized to spiro-lactone preaustinoid A3 by the combined action of the FAD-binding monooxygenases ausB and ausC, and the dioxygenase ausE. Acid-catalyzed keto-rearrangement and ring contraction of the tetraketide portion of preaustinoid A3 by ausJ lead to the formation of preaustinoid A4. The aldo-keto reductase ausK, with the help of ausH, is involved in the next step by transforming preaustinoid A4 into isoaustinone which is in turn hydroxylated by the P450 monooxygenase ausI to form austinolide. The cytochrome P450 monooxygenase ausG then modifies austinolide to austinol. Austinol is further acetylated to austin by the O-acetyltransferase ausP, which spontaneously changes to dehydroaustin. The cytochrome P450 monooxygenase then converts dehydroaustin is into 7-dehydrodehydroaustin. The hydroxylation catalyzed by ausR permits the second O-acetyltransferase ausQ to add an additional acetyl group to the molecule, leading to the formation of acetoxydehydroaustin. Due to genetic rearrangements of the clusters and the subsequent loss of some enzymes, the end product of the Penicillium brasilianum austinoid biosynthesis clusters is acetoxydehydroaustin. This is Methyltransferase ausD from Penicillium brasilianum.